Reading from the N-terminus, the 192-residue chain is Pyridoxal 5'-phosphate synthase subunit PdxT (192 aa).

50–52 (GES) is an L-glutamine binding site. Cys82 (nucleophile) is an active-site residue. L-glutamine-binding positions include Arg109 and 136–137 (IR). Active-site charge relay system residues include His172 and Glu174.

This sequence belongs to the glutaminase PdxT/SNO family. As to quaternary structure, in the presence of PdxS, forms a dodecamer of heterodimers. Only shows activity in the heterodimer.

It carries out the reaction aldehydo-D-ribose 5-phosphate + D-glyceraldehyde 3-phosphate + L-glutamine = pyridoxal 5'-phosphate + L-glutamate + phosphate + 3 H2O + H(+). It catalyses the reaction L-glutamine + H2O = L-glutamate + NH4(+). Its pathway is cofactor biosynthesis; pyridoxal 5'-phosphate biosynthesis. Catalyzes the hydrolysis of glutamine to glutamate and ammonia as part of the biosynthesis of pyridoxal 5'-phosphate. The resulting ammonia molecule is channeled to the active site of PdxS. The polypeptide is Pyridoxal 5'-phosphate synthase subunit PdxT (Haemophilus influenzae (strain PittGG)).